The primary structure comprises 417 residues: Echinulin prenyltransferase 1 (417 aa).

8 residues coordinate dimethylallyl diphosphate: Arg90, Lys179, Tyr181, Lys248, Tyr250, Tyr333, Tyr398, and Tyr402.

This sequence belongs to the tryptophan dimethylallyltransferase family.

The catalysed reaction is cyclo(L-tryptophyl-L-alanyl) + dimethylallyl diphosphate = preechinulin + diphosphate. It participates in secondary metabolite biosynthesis. The protein operates within alkaloid biosynthesis. Its function is as follows. Prenyltransferase; part of the gene cluster that mediates the biosynthesis of echinulin family alkaloid. The pathway begins with the biosynthesis of the cyclic dipeptide cyclo-L-Trp-L-Ala (cyclo-TA) by the NRPS echPS via condensation of L-alanine and L-tryptophan. The prenyltransferase echPT1 then catalyzes the first prenylation step, a reverse prenylation reaction at C2, to yield preechinulin. Preechinulin is the substrate of the cytochrome P450 monooxygenase echP450 that catalyzes the formation of the double bond between C10 and C11 to produce neoechulin A. The unique prenyltransferase echPT2 functions as a competitive enzyme with echP450 for preechinulin metabolization and uses preechinulin for effective regiospecific prenylations. Preechinulin is prenylated by echPT2 at C5 or C7. C7-prenylation leads to accumulation of tardioxopiperazine B without further modification by echPT2. In contrast, the C5-prenylated tardioxopiperazine A can be prenylated again by echPT2, predominantly at C7 to form echinulin or less frequently at C4 to give variecolorin L. EchPT2 also accepts neoechilunin A to produce varlecolorin G (prenylation at C5) or isoechinulin A (prenylation at C7). EchPT2 further converts isoechinulin A into dehydroechinulin. Moreover, a yet unidentified enzyme can also convert neoechilunin A into neoechilunin B by introducing a double bond between positions C14 and C17 and thus provides a further substrate to echPT2 for C5 and C7 prenylation. The chain is Echinulin prenyltransferase 1 from Aspergillus ruber (Eurotium rubrum).